The sequence spans 403 residues: Acetate kinase (403 aa).

Residue Asn-7 coordinates Mg(2+). Lys-14 is an ATP binding site. Arg-90 is a substrate binding site. Residue Asp-147 is the Proton donor/acceptor of the active site. Residues 207-211, 283-285, and 331-335 each bind ATP; these read HIGNG, DMR, and GVGEN. Mg(2+) is bound at residue Glu-386.

The protein belongs to the acetokinase family. Homodimer. Requires Mg(2+) as cofactor. The cofactor is Mn(2+).

It localises to the cytoplasm. The catalysed reaction is acetate + ATP = acetyl phosphate + ADP. The protein operates within metabolic intermediate biosynthesis; acetyl-CoA biosynthesis; acetyl-CoA from acetate: step 1/2. Functionally, catalyzes the formation of acetyl phosphate from acetate and ATP. Can also catalyze the reverse reaction. The chain is Acetate kinase from Thermotoga sp. (strain RQ2).